Here is a 359-residue protein sequence, read N- to C-terminus: Probable 2-oxoacid dependent dioxygenase (359 aa).

Residues 207–308 enclose the Fe2OG dioxygenase domain; the sequence is KGLWMLCHCF…ISVACFFVHT (102 aa). Positions 231, 233, and 287 each coordinate Fe cation. Residues 329-359 are disordered; that stretch reads PPKYRDTTSESSNHYVARKPNGNSSLDHLRI. Positions 349–359 are enriched in polar residues; it reads NGNSSLDHLRI.

Belongs to the iron/ascorbate-dependent oxidoreductase family. It depends on Fe(2+) as a cofactor. As to expression, expressed in leaves and seeds. All cultivars with seed-only-functional allele have low to non-detectable GSL-OH expression in the leaves.

The catalysed reaction is gluconapin + AH2 + O2 = progoitrin + A + H2O. Its function is as follows. Necessary for the hydroxylation of but-3-enyl glucosinolate to 2-hydroxybut-3-enyl glucosinolate, which is toxic to insects, bacteria and nematodes, inhibits seed germination and produces bitter flavors. This chain is Probable 2-oxoacid dependent dioxygenase, found in Arabidopsis thaliana (Mouse-ear cress).